The primary structure comprises 393 residues: S-adenosylmethionine synthase (393 aa).

H16 is an ATP binding site. D18 contributes to the Mg(2+) binding site. E44 serves as a coordination point for K(+). The L-methionine site is built by E57 and Q100. The segment at 100–110 is flexible loop; the sequence is QSNDIAQGVDH. ATP contacts are provided by residues 167–169, 238–239, D247, 253–254, A270, and K274; these read DAK, RF, and RK. D247 contacts L-methionine. K278 lines the L-methionine pocket.

Belongs to the AdoMet synthase family. Homotetramer; dimer of dimers. It depends on Mg(2+) as a cofactor. K(+) serves as cofactor.

Its subcellular location is the cytoplasm. The catalysed reaction is L-methionine + ATP + H2O = S-adenosyl-L-methionine + phosphate + diphosphate. It participates in amino-acid biosynthesis; S-adenosyl-L-methionine biosynthesis; S-adenosyl-L-methionine from L-methionine: step 1/1. Catalyzes the formation of S-adenosylmethionine (AdoMet) from methionine and ATP. The overall synthetic reaction is composed of two sequential steps, AdoMet formation and the subsequent tripolyphosphate hydrolysis which occurs prior to release of AdoMet from the enzyme. The chain is S-adenosylmethionine synthase from Acidovorax ebreus (strain TPSY) (Diaphorobacter sp. (strain TPSY)).